Consider the following 179-residue polypeptide: Large ribosomal subunit protein uL5 (179 aa).

The protein belongs to the universal ribosomal protein uL5 family. In terms of assembly, part of the 50S ribosomal subunit; part of the 5S rRNA/L5/L18/L25 subcomplex. Contacts the 5S rRNA and the P site tRNA. Forms a bridge to the 30S subunit in the 70S ribosome.

Functionally, this is one of the proteins that bind and probably mediate the attachment of the 5S RNA into the large ribosomal subunit, where it forms part of the central protuberance. In the 70S ribosome it contacts protein S13 of the 30S subunit (bridge B1b), connecting the 2 subunits; this bridge is implicated in subunit movement. Contacts the P site tRNA; the 5S rRNA and some of its associated proteins might help stabilize positioning of ribosome-bound tRNAs. The chain is Large ribosomal subunit protein uL5 from Yersinia enterocolitica serotype O:8 / biotype 1B (strain NCTC 13174 / 8081).